A 402-amino-acid chain; its full sequence is Putative FBD-associated F-box protein At5g56690 (402 aa).

One can recognise an F-box domain in the interval 1-47; it reads MAEISGLPDDLLVKILAFLPTKVAISTSVLSKQWRFLWMWLPKLKYD. The FBD domain occupies 349–401; the sequence is SWSKNQGSVPKCFLNSLETFRVKWYYSEEQEDRDFLSLIFKHARCLKSTSILH.

This Arabidopsis thaliana (Mouse-ear cress) protein is Putative FBD-associated F-box protein At5g56690.